The chain runs to 677 residues: DNA ligase (677 aa).

Residues 32 to 36, 81 to 82, and E112 each bind NAD(+); these read DAQYD and SL. K114 serves as the catalytic N6-AMP-lysine intermediate. Residues R135, E171, K288, and K312 each coordinate NAD(+). Zn(2+)-binding residues include C416, C419, C434, and C439. The BRCT domain maps to 598–677; sequence NKNMPFSGME…REFINMLEQS (80 aa).

It belongs to the NAD-dependent DNA ligase family. LigA subfamily. Mg(2+) serves as cofactor. Requires Mn(2+) as cofactor.

It carries out the reaction NAD(+) + (deoxyribonucleotide)n-3'-hydroxyl + 5'-phospho-(deoxyribonucleotide)m = (deoxyribonucleotide)n+m + AMP + beta-nicotinamide D-nucleotide.. Its function is as follows. DNA ligase that catalyzes the formation of phosphodiester linkages between 5'-phosphoryl and 3'-hydroxyl groups in double-stranded DNA using NAD as a coenzyme and as the energy source for the reaction. It is essential for DNA replication and repair of damaged DNA. The protein is DNA ligase of Dehalococcoides mccartyi (strain CBDB1).